Consider the following 265-residue polypeptide: Glutamate racemase (265 aa).

Substrate contacts are provided by residues 12-13 (DS) and 44-45 (YG). Cys75 functions as the Proton donor/acceptor in the catalytic mechanism. Residue 76–77 (NT) participates in substrate binding. Cys186 functions as the Proton donor/acceptor in the catalytic mechanism. 187 to 188 (TH) is a substrate binding site.

This sequence belongs to the aspartate/glutamate racemases family.

It carries out the reaction L-glutamate = D-glutamate. The protein operates within cell wall biogenesis; peptidoglycan biosynthesis. In terms of biological role, provides the (R)-glutamate required for cell wall biosynthesis. The sequence is that of Glutamate racemase from Pseudomonas paraeruginosa (strain DSM 24068 / PA7) (Pseudomonas aeruginosa (strain PA7)).